Consider the following 214-residue polypeptide: MRLRNIPGSREYIAQNDYVVHDPEQKKGKWHEVFGNNNPIHIEIGMGKGQFITSLAMQNPNINYIGIEKYSSVLLRAIEKREEYEGDNLYFLRFDAESITDIFAPSEVDRIYLNFSDPWPKDRHSKRRLTSSEFLARYDQFLVKDGYVAFKTDNRDLFDFSLEQVTLSGWQLRDVTFDLHHSEYVEGNIMTEYEERFSSMGNPIHRLVAFREKE.

S-adenosyl-L-methionine contacts are provided by Glu43, Glu68, Asp95, and Asp117. Asp117 is a catalytic residue. Residues Lys121, Asp153, and 191-194 each bind substrate; that span reads TEYE.

The protein belongs to the class I-like SAM-binding methyltransferase superfamily. TrmB family.

The enzyme catalyses guanosine(46) in tRNA + S-adenosyl-L-methionine = N(7)-methylguanosine(46) in tRNA + S-adenosyl-L-homocysteine. The protein operates within tRNA modification; N(7)-methylguanine-tRNA biosynthesis. In terms of biological role, catalyzes the formation of N(7)-methylguanine at position 46 (m7G46) in tRNA. In Lachnoclostridium phytofermentans (strain ATCC 700394 / DSM 18823 / ISDg) (Clostridium phytofermentans), this protein is tRNA (guanine-N(7)-)-methyltransferase.